Here is a 911-residue protein sequence, read N- to C-terminus: MIGKLFRAVFGSKNDRELKRMGKLVRKINALEPEFEPLDDTQLKAKTAEFRERFNNGESLDQLLPEAFAAAREASKRAMGMRHFDVQLIGGITLHEGRIAEMKTGEGKTLVATLAAYLNGIPGKGVHIVTVNDYLARRDANWMRPVYEALGMTVGSIVSMQDPAEKREAYAADITYGTNNEYGFDYLRDNMALRKEDRMQRPLAYAVVDEVDSILIDEARTPLIISGAAEDSSVLYQAINKLIPSLKRQPEAPEGEEPTELGHFTIDEKMRSIELTEDGHQLVEELLIKNGLLGENDSLYHASNLSLLHHILSGLRAHHLYHKNVEYIVQNGQVVLIDEHTGRTMPGRRLSEGLHQAIEAKEGVAIQAESQTMASTTFQNYFRIYDKLAGMTGTADTEAFEFRQIYGLDVVVIPTNRPVARKDLNDLIFLSVEDKYDAIIEDVNEFRGKNAPVLVGTASVETSEEMSKRLTEAGIAHEVLNAKQHEREADIIAQAGRPGAVTIATNMAGRGTDIVLGGKWQAEIDKLENPTEEQIAAIKEDWKKRHEIVLEAGGLHIIGTERHESRRIDNQLRGRAGRQGDPGLSRFYLSLEDNLMRIFASDRMRAIMQTLGMEKGEAIEHRMVTNAIEKAQRKVEGRNFDYRKQLLEYDDVANDQRRVVYAQRNELLEADDIEEAIHGIREDVIAAQLESFVPPQSVEEQWDIKGLEQTLLNDYGVSVPLQQWLDEDSKMDEEGLRTKLTEVMDEIYARKCEAIGSAMRTLEKQLMLQVLDTLWKEHLQNMDALRQGINLRAYAQRNPKQEYKRESFTLFEEMLQNLKFDLTRVLFRVQPISEEQLAEMERRRQAEAAARKIQLQHEQVSGLEPEAGEAPSAGEPRSEQPYVRAGRKVGRNDPCPCGSGKKFKACHGKLG.

Residues Gln87, Gly105–Thr109, and Asp513 contribute to the ATP site. The interval Ile853 to Gly911 is disordered. A compositionally biased stretch (low complexity) spans Gly862–Glu875. Cys895, Cys897, Cys906, and His907 together coordinate Zn(2+). Residues Lys901 to Gly911 are compositionally biased toward basic residues.

The protein belongs to the SecA family. Monomer and homodimer. Part of the essential Sec protein translocation apparatus which comprises SecA, SecYEG and auxiliary proteins SecDF-YajC and YidC. Zn(2+) serves as cofactor.

It localises to the cell inner membrane. The protein localises to the cytoplasm. The enzyme catalyses ATP + H2O + cellular proteinSide 1 = ADP + phosphate + cellular proteinSide 2.. In terms of biological role, part of the Sec protein translocase complex. Interacts with the SecYEG preprotein conducting channel. Has a central role in coupling the hydrolysis of ATP to the transfer of proteins into and across the cell membrane, serving both as a receptor for the preprotein-SecB complex and as an ATP-driven molecular motor driving the stepwise translocation of polypeptide chains across the membrane. The polypeptide is Protein translocase subunit SecA (Teredinibacter turnerae (strain ATCC 39867 / T7901)).